Here is a 418-residue protein sequence, read N- to C-terminus: Adenylosuccinate synthetase 2 (418 aa).

GTP-binding positions include 12–18 (GDEGKGR) and 40–42 (GHT). Residue Asp13 is the Proton acceptor of the active site. 2 residues coordinate Mg(2+): Asp13 and Gly40. IMP contacts are provided by residues 13–16 (DEGK), 38–41 (NAGH), Thr127, Lys141, Thr239, and Arg301. Catalysis depends on His41, which acts as the Proton donor. Residue 297–303 (AVTGRPR) participates in substrate binding. GTP is bound by residues Arg303, 329–331 (KID), and 407–409 (SVG).

The protein belongs to the adenylosuccinate synthetase family. Homodimer. Mg(2+) serves as cofactor.

It is found in the cytoplasm. The catalysed reaction is IMP + L-aspartate + GTP = N(6)-(1,2-dicarboxyethyl)-AMP + GDP + phosphate + 2 H(+). It participates in purine metabolism; AMP biosynthesis via de novo pathway; AMP from IMP: step 1/2. Its function is as follows. Plays an important role in the de novo pathway of purine nucleotide biosynthesis. Catalyzes the first committed step in the biosynthesis of AMP from IMP. The sequence is that of Adenylosuccinate synthetase 2 from Pseudoalteromonas translucida (strain TAC 125).